The chain runs to 114 residues: Histone H2A.Z-specific chaperone chz-1 (114 aa).

Polar residues predominate over residues 1–22; that stretch reads MSTENGTTDTTLAGTAEANTPF. Positions 1-114 are disordered; that stretch reads MSTENGTTDT…FVPEDEEMEE (114 aa). A compositionally biased stretch (basic and acidic residues) spans 24–40; that stretch reads SKGKGKAAAESEDHPMG. Acidic residues-rich tracts occupy residues 41–68 and 93–114; these read EAEDDEDDEDEDETEEPEAEEDNLEEID and PAEEDDEEDDEEFVPEDEEMEE.

The protein belongs to the CHZ1 family. In terms of assembly, forms a heterotrimer with H2A.Z-H2B, stabilizing the association of the histone dimer. Also, with a lower affinity, forms a heterotrimer with H2A-H2B.

The protein localises to the nucleus. In terms of biological role, forms a chaperone-bound H2A.Z-H2B complex that acts as a source for SWR1 complex-dependent H2A to H2A.Z histone replacement in chromatin. This Neurospora crassa (strain ATCC 24698 / 74-OR23-1A / CBS 708.71 / DSM 1257 / FGSC 987) protein is Histone H2A.Z-specific chaperone chz-1 (chz-1).